The chain runs to 219 residues: Holliday junction branch migration complex subunit RuvA (219 aa).

Residues 1–71 are domain I; it reads MISWIKGELV…EDSDMLFGFS (71 aa). Residues 72-150 are domain II; that stretch reads TKDQRDFFIQ…NKEIEKENLN (79 aa). Residues 151–161 form a flexible linker region; that stretch reads INNFLEKNKDL. Positions 161–219 are domain III; sequence LDSIFKDIDLTLQSLNYSKKEIKNLFPKLINNIKNSSLEKESISFENLLKEAMNYLDHK.

It belongs to the RuvA family. As to quaternary structure, homotetramer. Forms an RuvA(8)-RuvB(12)-Holliday junction (HJ) complex. HJ DNA is sandwiched between 2 RuvA tetramers; dsDNA enters through RuvA and exits via RuvB. An RuvB hexamer assembles on each DNA strand where it exits the tetramer. Each RuvB hexamer is contacted by two RuvA subunits (via domain III) on 2 adjacent RuvB subunits; this complex drives branch migration. In the full resolvosome a probable DNA-RuvA(4)-RuvB(12)-RuvC(2) complex forms which resolves the HJ.

The protein localises to the cytoplasm. Its function is as follows. The RuvA-RuvB-RuvC complex processes Holliday junction (HJ) DNA during genetic recombination and DNA repair, while the RuvA-RuvB complex plays an important role in the rescue of blocked DNA replication forks via replication fork reversal (RFR). RuvA specifically binds to HJ cruciform DNA, conferring on it an open structure. The RuvB hexamer acts as an ATP-dependent pump, pulling dsDNA into and through the RuvAB complex. HJ branch migration allows RuvC to scan DNA until it finds its consensus sequence, where it cleaves and resolves the cruciform DNA. The sequence is that of Holliday junction branch migration complex subunit RuvA from Prochlorococcus marinus subsp. pastoris (strain CCMP1986 / NIES-2087 / MED4).